Here is a 140-residue protein sequence, read N- to C-terminus: uncharacterized protein (140 aa).

Residues 62–140 (TEARAGRGGP…PQGRWGPSLG (79 aa)) form a disordered region. Residues 71 to 94 (PATARSRVSADSQGGRAGSSSPSS) show a composition bias toward low complexity.

This is an uncharacterized protein from Homo sapiens (Human).